A 268-amino-acid chain; its full sequence is 4-hydroxy-tetrahydrodipicolinate reductase (268 aa).

9-14 (GCSGRM) serves as a coordination point for NAD(+). Arg-36 lines the NADP(+) pocket. NAD(+) contacts are provided by residues 98–100 (GTT) and 122–125 (APNT). The active-site Proton donor/acceptor is His-155. Residue His-156 coordinates (S)-2,3,4,5-tetrahydrodipicolinate. The active-site Proton donor is the Lys-159. 165–166 (GT) is a (S)-2,3,4,5-tetrahydrodipicolinate binding site.

This sequence belongs to the DapB family.

The protein localises to the cytoplasm. It catalyses the reaction (S)-2,3,4,5-tetrahydrodipicolinate + NAD(+) + H2O = (2S,4S)-4-hydroxy-2,3,4,5-tetrahydrodipicolinate + NADH + H(+). The enzyme catalyses (S)-2,3,4,5-tetrahydrodipicolinate + NADP(+) + H2O = (2S,4S)-4-hydroxy-2,3,4,5-tetrahydrodipicolinate + NADPH + H(+). The protein operates within amino-acid biosynthesis; L-lysine biosynthesis via DAP pathway; (S)-tetrahydrodipicolinate from L-aspartate: step 4/4. In terms of biological role, catalyzes the conversion of 4-hydroxy-tetrahydrodipicolinate (HTPA) to tetrahydrodipicolinate. In Colwellia psychrerythraea (strain 34H / ATCC BAA-681) (Vibrio psychroerythus), this protein is 4-hydroxy-tetrahydrodipicolinate reductase.